A 161-amino-acid chain; its full sequence is Endoribonuclease YbeY (161 aa).

Zn(2+) is bound by residues His-127, His-131, and His-137.

This sequence belongs to the endoribonuclease YbeY family. Zn(2+) serves as cofactor.

The protein resides in the cytoplasm. Functionally, single strand-specific metallo-endoribonuclease involved in late-stage 70S ribosome quality control and in maturation of the 3' terminus of the 16S rRNA. The chain is Endoribonuclease YbeY from Listeria monocytogenes serotype 4b (strain CLIP80459).